The sequence spans 200 residues: MGQEFSWEEAEAAGEIDVAELQEWYKKFVMECPSGTLFMHEFKRFFKVTDDEEASQYVEGMFRAFDKNGDNTIDFLEYVAALNLVLRGTLEHKLKWTFKIYDKDGNGCIDRLELLNIVEGIYQLKKACRRELQTEQGQLLTPEEVVDRIFLLVDENGDGQLSLNEFVEGARRDKWVMKMLQMDMNPSSWLAQQRRKSAMF.

A lipid anchor (N-myristoyl glycine) is attached at glycine 2. 4 EF-hand domains span residues 14 to 31 (GEID…FVME), 53 to 88 (EASQ…VLRG), 89 to 124 (TLEH…IYQL), and 141 to 176 (TPEE…DKWV). Aspartate 66, asparagine 68, aspartate 70, threonine 72, glutamate 77, aspartate 102, aspartate 104, asparagine 106, cysteine 108, glutamate 113, aspartate 154, asparagine 156, aspartate 158, glutamine 160, and glutamate 165 together coordinate Ca(2+).

In terms of processing, the N-terminus is blocked. As to expression, in the retina, it is expressed in cone and rod photoreceptor cells.

It localises to the cell membrane. The protein resides in the photoreceptor inner segment. The protein localises to the cell projection. It is found in the cilium. Its subcellular location is the photoreceptor outer segment. Functionally, stimulates two retinal guanylyl cyclases (GCs) GUCY2D and GUCY2F when free calcium ions concentration is low, and inhibits GUCY2D and GUCY2F when free calcium ions concentration is elevated. This Ca(2+)-sensitive regulation of GCs is a key event in recovery of the dark state of rod photoreceptors following light exposure. May be involved in cone photoreceptor response and recovery of response in bright light. The protein is Guanylyl cyclase-activating protein 2 (GUCA1B) of Homo sapiens (Human).